The following is a 172-amino-acid chain: Large ribosomal subunit protein uL10 (172 aa).

This sequence belongs to the universal ribosomal protein uL10 family. Part of the ribosomal stalk of the 50S ribosomal subunit. The N-terminus interacts with L11 and the large rRNA to form the base of the stalk. The C-terminus forms an elongated spine to which L12 dimers bind in a sequential fashion forming a multimeric L10(L12)X complex.

Forms part of the ribosomal stalk, playing a central role in the interaction of the ribosome with GTP-bound translation factors. This Brucella suis (strain ATCC 23445 / NCTC 10510) protein is Large ribosomal subunit protein uL10.